Consider the following 314-residue polypeptide: Carbamate kinase (314 aa).

Belongs to the carbamate kinase family. In terms of assembly, homodimer.

It localises to the cytoplasm. The enzyme catalyses hydrogencarbonate + NH4(+) + ATP = carbamoyl phosphate + ADP + H2O + H(+). In terms of biological role, carbamate kinase that plays a biosynthetic role in that it produces carbamoyl-phosphate. This is Carbamate kinase (cpkA) from Pyrococcus furiosus (strain ATCC 43587 / DSM 3638 / JCM 8422 / Vc1).